Reading from the N-terminus, the 66-residue chain is Large ribosomal subunit protein bL33c (66 aa).

The protein belongs to the bacterial ribosomal protein bL33 family.

The protein localises to the plastid. Its subcellular location is the chloroplast. In Agrostis stolonifera (Creeping bentgrass), this protein is Large ribosomal subunit protein bL33c.